The following is a 598-amino-acid chain: MKNIRNFSIIAHIDHGKSTLSDRLIQTCGGLSDREMEAQVLDSMDLERERGITIKAQSVTLNYKAKDGETYQLNFIDTPGHVDFSYEVSRSLAACEGALLVVDAGQGVEAQTLANCYTAIEMDLEVVPILNKIDLPAADPERVAEEIEDIVGIDAMEAVRCSAKTGVGIEDVLEEIVAKIPAPEGDPNAPLQALIIDSWFDNYLGVVSLVRIKNGVLRKGDKIKVMSTGQTYNVDRLGIFTPKQEDTTVLECGEVGWVVCAIKDILGAPVGDTLTHQHNSATEVLPGFKKVKPQVYAGLFPVSSDDYEAFRDALGKLSLNDASLFYEPETSTALGFGFRCGFLGLLHMEIIQERLEREYDLDLITTAPTVIYEVEMTNGEVVYVDSPAKLPPLNNIAEIREPIAECNMLVPQEYLGNVITLCVEKRGVQTNMVYHGNQIALTYEIPMGEVVLDFFDRLKSTSRGYASLDYGFKRFQAADMVRVDIMINSERVDALALIVHKDNSQYRGRELVEKMRELIPRQQFDIAIQAAIGNHIIARSTVKQLRKNVLAKCYGGDVSRKKKLLQKQKEGKKRMKSLGNVEVPQEAFLAILHVGKDK.

Positions 2-184 (KNIRNFSIIA…EIVAKIPAPE (183 aa)) constitute a tr-type G domain. Residues 14–19 (DHGKST) and 131–134 (NKID) each bind GTP.

It belongs to the TRAFAC class translation factor GTPase superfamily. Classic translation factor GTPase family. LepA subfamily.

The protein resides in the cell inner membrane. It carries out the reaction GTP + H2O = GDP + phosphate + H(+). In terms of biological role, required for accurate and efficient protein synthesis under certain stress conditions. May act as a fidelity factor of the translation reaction, by catalyzing a one-codon backward translocation of tRNAs on improperly translocated ribosomes. Back-translocation proceeds from a post-translocation (POST) complex to a pre-translocation (PRE) complex, thus giving elongation factor G a second chance to translocate the tRNAs correctly. Binds to ribosomes in a GTP-dependent manner. The chain is Elongation factor 4 from Haemophilus influenzae (strain ATCC 51907 / DSM 11121 / KW20 / Rd).